We begin with the raw amino-acid sequence, 127 residues long: Protein ApaG (127 aa).

The region spanning 3-127 (DQPPTEIQIS…FRLAAATVFH (125 aa)) is the ApaG domain.

In Acidithiobacillus ferrooxidans (strain ATCC 23270 / DSM 14882 / CIP 104768 / NCIMB 8455) (Ferrobacillus ferrooxidans (strain ATCC 23270)), this protein is Protein ApaG.